The chain runs to 287 residues: 4-hydroxybenzoate octaprenyltransferase (287 aa).

The next 9 helical transmembrane spans lie at Pro-19 to Gly-39, Leu-43 to Ile-63, Val-94 to Phe-114, Leu-118 to Ile-138, Val-142 to Ile-162, Trp-167 to Val-187, Val-209 to Leu-229, Tyr-235 to Ser-255, and Phe-263 to Gly-283.

This sequence belongs to the UbiA prenyltransferase family. The cofactor is Mg(2+).

Its subcellular location is the cell inner membrane. It catalyses the reaction all-trans-octaprenyl diphosphate + 4-hydroxybenzoate = 4-hydroxy-3-(all-trans-octaprenyl)benzoate + diphosphate. The protein operates within cofactor biosynthesis; ubiquinone biosynthesis. Its function is as follows. Catalyzes the prenylation of para-hydroxybenzoate (PHB) with an all-trans polyprenyl group. Mediates the second step in the final reaction sequence of ubiquinone-8 (UQ-8) biosynthesis, which is the condensation of the polyisoprenoid side chain with PHB, generating the first membrane-bound Q intermediate 3-octaprenyl-4-hydroxybenzoate. This chain is 4-hydroxybenzoate octaprenyltransferase, found in Polynucleobacter asymbioticus (strain DSM 18221 / CIP 109841 / QLW-P1DMWA-1) (Polynucleobacter necessarius subsp. asymbioticus).